The primary structure comprises 481 residues: Aspartyl/glutamyl-tRNA(Asn/Gln) amidotransferase subunit B (481 aa).

Belongs to the GatB/GatE family. GatB subfamily. As to quaternary structure, heterotrimer of A, B and C subunits.

The catalysed reaction is L-glutamyl-tRNA(Gln) + L-glutamine + ATP + H2O = L-glutaminyl-tRNA(Gln) + L-glutamate + ADP + phosphate + H(+). The enzyme catalyses L-aspartyl-tRNA(Asn) + L-glutamine + ATP + H2O = L-asparaginyl-tRNA(Asn) + L-glutamate + ADP + phosphate + 2 H(+). In terms of biological role, allows the formation of correctly charged Asn-tRNA(Asn) or Gln-tRNA(Gln) through the transamidation of misacylated Asp-tRNA(Asn) or Glu-tRNA(Gln) in organisms which lack either or both of asparaginyl-tRNA or glutaminyl-tRNA synthetases. The reaction takes place in the presence of glutamine and ATP through an activated phospho-Asp-tRNA(Asn) or phospho-Glu-tRNA(Gln). In Pseudomonas entomophila (strain L48), this protein is Aspartyl/glutamyl-tRNA(Asn/Gln) amidotransferase subunit B.